A 370-amino-acid polypeptide reads, in one-letter code: MREETAEQPAPLRSGLTTGSCATATSLAAARLLLSGQISDAVEIVLPKGKQVQMRLEFCRRVDNFAEAGTLKDAGDDPDVTHGALVFARVRQEAAPGVRFVAGAGVGSVTRPGLVLAVGEPAINPVPRRMMTEHLLRLAEELGYSGGFEVTIGVEGGEALALKTMNPRLGILGGLSILGTSGIVRPFSCAAYIASIHQGIDVATTNGYRHIAACTGNASEDTMRRVYNIPDIALIEMGDFVGAVLKHLRKVPVDKLSLCGGFGKISKLAAGHMDLHSRHSSIDLPQLALWAAQVGADAALQQQILHANTSQQALAMCAAAGVPLGDEVCRHALAFARSVVPATVEVEVFAIDRQGGVVGQAGVALSKEHT.

It belongs to the CbiD family.

It carries out the reaction Co-precorrin-5B + S-adenosyl-L-methionine = Co-precorrin-6A + S-adenosyl-L-homocysteine. It functions in the pathway cofactor biosynthesis; adenosylcobalamin biosynthesis; cob(II)yrinate a,c-diamide from sirohydrochlorin (anaerobic route): step 6/10. In terms of biological role, catalyzes the methylation of C-1 in cobalt-precorrin-5B to form cobalt-precorrin-6A. The sequence is that of Cobalt-precorrin-5B C(1)-methyltransferase from Pseudomonas syringae pv. tomato (strain ATCC BAA-871 / DC3000).